The following is a 192-amino-acid chain: Imidazoleglycerol-phosphate dehydratase (192 aa).

It belongs to the imidazoleglycerol-phosphate dehydratase family.

It is found in the cytoplasm. The catalysed reaction is D-erythro-1-(imidazol-4-yl)glycerol 3-phosphate = 3-(imidazol-4-yl)-2-oxopropyl phosphate + H2O. Its pathway is amino-acid biosynthesis; L-histidine biosynthesis; L-histidine from 5-phospho-alpha-D-ribose 1-diphosphate: step 6/9. This is Imidazoleglycerol-phosphate dehydratase from Carboxydothermus hydrogenoformans (strain ATCC BAA-161 / DSM 6008 / Z-2901).